A 643-amino-acid chain; its full sequence is Phosphomethylpyrimidine synthase (643 aa).

Substrate is bound by residues Asn248, Met277, Tyr306, His342, 362-364, 403-406, and Glu442; these read SRG and DGLR. His446 serves as a coordination point for Zn(2+). Tyr469 contacts substrate. His510 lines the Zn(2+) pocket. The [4Fe-4S] cluster site is built by Cys590, Cys593, and Cys598.

It belongs to the ThiC family. In terms of assembly, homodimer. Requires [4Fe-4S] cluster as cofactor.

The catalysed reaction is 5-amino-1-(5-phospho-beta-D-ribosyl)imidazole + S-adenosyl-L-methionine = 4-amino-2-methyl-5-(phosphooxymethyl)pyrimidine + CO + 5'-deoxyadenosine + formate + L-methionine + 3 H(+). The protein operates within cofactor biosynthesis; thiamine diphosphate biosynthesis. In terms of biological role, catalyzes the synthesis of the hydroxymethylpyrimidine phosphate (HMP-P) moiety of thiamine from aminoimidazole ribotide (AIR) in a radical S-adenosyl-L-methionine (SAM)-dependent reaction. The polypeptide is Phosphomethylpyrimidine synthase (Paraburkholderia phytofirmans (strain DSM 17436 / LMG 22146 / PsJN) (Burkholderia phytofirmans)).